Here is a 155-residue protein sequence, read N- to C-terminus: MKIMVIQGPNLNMLGMREPNIYGRMKLEDIHKQMQSVADQAGTEIEFFQSNFEGEIVDKIQECVGTADGIIINPAAYTHTSIAIHDAILAVSLPTIEVHISNPARREDYRKTSLIAPVTAGQIIGFGPIGYHLAMMGMLQIFEQIKAIKTANKGE.

Residue Tyr-22 is the Proton acceptor of the active site. Residues Asn-73, His-79, and Asp-86 each coordinate substrate. His-99 serves as the catalytic Proton donor. Residues 100-101 (IS) and Arg-110 each bind substrate.

This sequence belongs to the type-II 3-dehydroquinase family. As to quaternary structure, homododecamer.

It catalyses the reaction 3-dehydroquinate = 3-dehydroshikimate + H2O. It functions in the pathway metabolic intermediate biosynthesis; chorismate biosynthesis; chorismate from D-erythrose 4-phosphate and phosphoenolpyruvate: step 3/7. Functionally, catalyzes a trans-dehydration via an enolate intermediate. The protein is 3-dehydroquinate dehydratase of Campylobacter hominis (strain ATCC BAA-381 / DSM 21671 / CCUG 45161 / LMG 19568 / NCTC 13146 / CH001A).